The following is a 637-amino-acid chain: Protein arginine N-methyltransferase 5 (637 aa).

Ala2 is modified (N-acetylalanine; in Protein arginine N-methyltransferase 5, N-terminally processed). The TIM barrel stretch occupies residues 13–292 (RVSSGRDLNC…YLEYLSQNRP (280 aa)). The SAM-dependent MTase PRMT-type domain maps to 308–615 (LQSPLQPLMD…SNSKKVWYEW (308 aa)). Tyr324 is a binding site for S-adenosyl-L-methionine. Residue Phe327 coordinates a protein. Residues 333–334 (KY), Glu392, and 419–420 (DM) contribute to the S-adenosyl-L-methionine site. A protein is bound by residues Glu435 and Glu444. Active-site proton donor/acceptor residues include Glu435 and Glu444. The tract at residues 465-637 (PGEYTSFLAP…PTGRSYTIGL (173 aa)) is beta barrel. Residues 488–494 (REKDRDP) form a dimerization region.

Belongs to the class I-like SAM-binding methyltransferase superfamily. Protein arginine N-methyltransferase family. As to quaternary structure, forms, at least, homodimers and homotetramers. Component of the methylosome complex, composed of PRMT5, WDR77 and CLNS1A. Found in a complex composed of PRMT5, WDR77 and RIOK1. RIOK1 and CLNS1A associate with PRMT5 in a mutually exclusive fashion, which allows the recruitment of distinct methylation substrates, such as nucleolin/NCL and Sm proteins, respectively. Interacts with PRDM1. Identified in a complex composed of methylosome and PRMT1 and ERH. Interacts with EGFR; methylates EGFR and stimulates EGFR-mediated ERK activation. Interacts with HOXA9. Interacts with SRGAP2. Found in a complex with COPRS, RUNX1 and CBFB. Interacts with CHTOP; the interaction symmetrically methylates CHTOP, but seems to require the presence of PRMT1. Interacts with EPB41L3; this modulates methylation of target proteins. Component of a high molecular weight E2F-pocket protein complex, CERC (cyclin E1 repressor complex). Associates with SWI/SNF remodeling complexes containing SMARCA2 and SMARCA4. Interacts with JAK2, SSTR1, SUPT5H, BRAF and with active RAF1. Interacts with LSM11, PRMT7 and SNRPD3. Interacts with COPRS; promoting its recruitment on histone H4. Interacts with CLNS1A/pICln. Identified in a complex with CLNS1A/pICln and Sm proteins. Interacts with RPS10. Interacts with WDR77. Interacts with IWS1. Interacts with CRY1. Interacts with POLR2A. Interacts with SMN1/SMN2. Interacts with LYAR; this interaction is direct. Interacts with TTC5/STRAP; this interaction is DNA damage-dependent and promotes PRMT5 interaction with p53/TP53. Interacts with p53/TP53 in response to DNA damage; the interaction is TTC5/STRAP dependent. Interacts with FAM47E; the interaction is direct, promotes PRMT5 localization to chromatin, and does not disrupt its association with WDR77 or STUB1. Interacts with TDRD6. Interacts with STUB1. Interacts with MBD2. Does not interact with MBD3. As to expression, ubiquitous.

The protein localises to the cytoplasm. The protein resides in the nucleus. It is found in the chromosome. Its subcellular location is the golgi apparatus. The enzyme catalyses L-arginyl-[protein] + 2 S-adenosyl-L-methionine = N(omega),N(omega)'-dimethyl-L-arginyl-[protein] + 2 S-adenosyl-L-homocysteine + 2 H(+). With respect to regulation, activity is increased by EGF, HGF, FGF1 or FGF2 treatments, and slightly decreased by NGF treatment. Arginine methyltransferase that can both catalyze the formation of omega-N monomethylarginine (MMA) and symmetrical dimethylarginine (sDMA), with a preference for the formation of MMA. Specifically mediates the symmetrical dimethylation of arginine residues in the small nuclear ribonucleoproteins Sm D1 (SNRPD1) and Sm D3 (SNRPD3); such methylation being required for the assembly and biogenesis of snRNP core particles. Methylates SUPT5H and may regulate its transcriptional elongation properties. May methylate the N-terminal region of MBD2. Mono- and dimethylates arginine residues of myelin basic protein (MBP) in vitro. May play a role in cytokine-activated transduction pathways. Negatively regulates cyclin E1 promoter activity and cellular proliferation. Methylates histone H2A and H4 'Arg-3' during germ cell development. Methylates histone H3 'Arg-8', which may repress transcription. Methylates the Piwi proteins (PIWIL1, PIWIL2 and PIWIL4), methylation of Piwi proteins being required for the interaction with Tudor domain-containing proteins and subsequent localization to the meiotic nuage. Methylates RPS10. Attenuates EGF signaling through the MAPK1/MAPK3 pathway acting at 2 levels. First, monomethylates EGFR; this enhances EGFR 'Tyr-1197' phosphorylation and PTPN6 recruitment, eventually leading to reduced SOS1 phosphorylation. Second, methylates RAF1 and probably BRAF, hence destabilizing these 2 signaling proteins and reducing their catalytic activity. Required for induction of E-selectin and VCAM-1, on the endothelial cells surface at sites of inflammation. Methylates HOXA9. Methylates and regulates SRGAP2 which is involved in cell migration and differentiation. Acts as a transcriptional corepressor in CRY1-mediated repression of the core circadian component PER1 by regulating the H4R3 dimethylation at the PER1 promoter. Methylates GM130/GOLGA2, regulating Golgi ribbon formation. Methylates H4R3 in genes involved in glioblastomagenesis in a CHTOP- and/or TET1-dependent manner. Symmetrically methylates POLR2A, a modification that allows the recruitment to POLR2A of proteins including SMN1/SMN2 and SETX. This is required for resolving RNA-DNA hybrids created by RNA polymerase II, that form R-loop in transcription terminal regions, an important step in proper transcription termination. Along with LYAR, binds the promoter of gamma-globin HBG1/HBG2 and represses its expression. Symmetrically methylates NCL. Methylates p53/TP53; methylation might possibly affect p53/TP53 target gene specificity. Involved in spliceosome maturation and mRNA splicing in prophase I spermatocytes through the catalysis of the symmetrical arginine dimethylation of SNRPB (small nuclear ribonucleoprotein-associated protein) and the interaction with tudor domain-containing protein TDRD6. The protein is Protein arginine N-methyltransferase 5 (PRMT5) of Homo sapiens (Human).